A 279-amino-acid chain; its full sequence is MRSGVIAKKVGMTRLFMEDGKQVPVTVLQLDKLQVVAQRTAEKDGYSAVQLGAGTAKAKRTTKAMRGHFAAASVEPKRKVAEFRVAPENLINVGEEITADHYFEGQYVDVSGTSIGKGFAGAMKRHNFGGLRASHGVSISHRSHGSTGQCQDPGKVFKGKKMAGHMGAARVTTQNLQVVRTDADRGLIMIKGAVPGSKGGWVTIKDAVKKPVPENVILPAALKSAAEEAKRLAEEAAAAAEAEAKAAEEAAAAEAAAAEEAALKQAEAQIEAEKKEGDE.

Gln151 bears the N5-methylglutamine mark.

Belongs to the universal ribosomal protein uL3 family. Part of the 50S ribosomal subunit. Forms a cluster with proteins L14 and L19. Methylated by PrmB.

One of the primary rRNA binding proteins, it binds directly near the 3'-end of the 23S rRNA, where it nucleates assembly of the 50S subunit. In Dinoroseobacter shibae (strain DSM 16493 / NCIMB 14021 / DFL 12), this protein is Large ribosomal subunit protein uL3.